The chain runs to 462 residues: Glycine--tRNA ligase (462 aa).

Arginine 100 and glutamate 174 together coordinate substrate. Residues 206–208, 216–221, 290–291, and 334–337 each bind ATP; these read RNE, FRTREF, EL, and GVDR. Position 221–225 (221–225) interacts with substrate; sequence FEQME. 330–334 is a substrate binding site; that stretch reads EPSVG.

The protein belongs to the class-II aminoacyl-tRNA synthetase family. As to quaternary structure, homodimer.

It is found in the cytoplasm. It catalyses the reaction tRNA(Gly) + glycine + ATP = glycyl-tRNA(Gly) + AMP + diphosphate. Its function is as follows. Catalyzes the attachment of glycine to tRNA(Gly). This Alkaliphilus oremlandii (strain OhILAs) (Clostridium oremlandii (strain OhILAs)) protein is Glycine--tRNA ligase.